The chain runs to 124 residues: Hydrogenase maturation factor HypA (124 aa).

Ni(2+) is bound at residue H2. 4 residues coordinate Zn(2+): C78, C81, C97, and C100.

Belongs to the HypA/HybF family.

Involved in the maturation of [NiFe] hydrogenases. Required for nickel insertion into the metal center of the hydrogenase. The chain is Hydrogenase maturation factor HypA from Methanococcus vannielii (strain ATCC 35089 / DSM 1224 / JCM 13029 / OCM 148 / SB).